We begin with the raw amino-acid sequence, 200 residues long: GTP cyclohydrolase-2 (200 aa).

A GTP-binding site is contributed by 49-53 (RVHSE). The Zn(2+) site is built by cysteine 54, cysteine 65, and cysteine 67. GTP is bound by residues glutamine 70, 92–94 (EGR), and threonine 114. The active-site Proton acceptor is aspartate 126. The active-site Nucleophile is the arginine 128. Threonine 149 and lysine 154 together coordinate GTP.

Belongs to the GTP cyclohydrolase II family. In terms of assembly, homodimer. Zn(2+) serves as cofactor.

The enzyme catalyses GTP + 4 H2O = 2,5-diamino-6-hydroxy-4-(5-phosphoribosylamino)-pyrimidine + formate + 2 phosphate + 3 H(+). It participates in cofactor biosynthesis; riboflavin biosynthesis; 5-amino-6-(D-ribitylamino)uracil from GTP: step 1/4. Its function is as follows. Catalyzes the conversion of GTP to 2,5-diamino-6-ribosylamino-4(3H)-pyrimidinone 5'-phosphate (DARP), formate and pyrophosphate. The chain is GTP cyclohydrolase-2 from Klebsiella pneumoniae subsp. pneumoniae (strain ATCC 700721 / MGH 78578).